Reading from the N-terminus, the 290-residue chain is GTPase Era (290 aa).

The Era-type G domain occupies 2–167 (KSGFVSIVGR…LDELVKYLPE (166 aa)). The segment at 10–17 (GRTNAGKS) is G1. GTP is bound at residue 10-17 (GRTNAGKS). Residues 36-40 (NATRR) are G2. Residues 57–60 (DTPG) form a G3 region. GTP is bound by residues 57-61 (DTPGL) and 116-119 (NKVD). The tract at residues 116–119 (NKVD) is G4. The interval 146–148 (YSI) is G5. One can recognise a KH type-2 domain in the interval 194–274 (IYENLSDEIP…MLKLFVQLEK (81 aa)).

It belongs to the TRAFAC class TrmE-Era-EngA-EngB-Septin-like GTPase superfamily. Era GTPase family. As to quaternary structure, monomer.

Its subcellular location is the cytoplasm. It localises to the cell inner membrane. An essential GTPase that binds both GDP and GTP, with rapid nucleotide exchange. Plays a role in 16S rRNA processing and 30S ribosomal subunit biogenesis and possibly also in cell cycle regulation and energy metabolism. In Campylobacter lari (strain RM2100 / D67 / ATCC BAA-1060), this protein is GTPase Era.